The sequence spans 353 residues: 3-dehydroquinate synthase (353 aa).

NAD(+) contacts are provided by residues 61–66, 119–120, Lys132, and Lys141; these read DGEEAK and TT. 3 residues coordinate Zn(2+): Glu174, His238, and His254.

It belongs to the sugar phosphate cyclases superfamily. Dehydroquinate synthase family. It depends on Co(2+) as a cofactor. The cofactor is Zn(2+). NAD(+) serves as cofactor.

The protein localises to the cytoplasm. It catalyses the reaction 7-phospho-2-dehydro-3-deoxy-D-arabino-heptonate = 3-dehydroquinate + phosphate. The protein operates within metabolic intermediate biosynthesis; chorismate biosynthesis; chorismate from D-erythrose 4-phosphate and phosphoenolpyruvate: step 2/7. Catalyzes the conversion of 3-deoxy-D-arabino-heptulosonate 7-phosphate (DAHP) to dehydroquinate (DHQ). The sequence is that of 3-dehydroquinate synthase from Sulfolobus acidocaldarius (strain ATCC 33909 / DSM 639 / JCM 8929 / NBRC 15157 / NCIMB 11770).